Here is a 221-residue protein sequence, read N- to C-terminus: uncharacterized protein (221 aa).

The first 26 residues, 1-26, serve as a signal peptide directing secretion; it reads MVRLVPRAFAATVALLAAGFSPATAS.

This is an uncharacterized protein from Mycobacterium tuberculosis (strain CDC 1551 / Oshkosh).